The following is a 430-amino-acid chain: Solanesyl-diphosphate synthase 1, mitochondrial (430 aa).

Residues 1–31 (MSWRWALARRVAALGATSGGGDGATAQAQRL) constitute a mitochondrion transit peptide. Residues lysine 133, arginine 136, and histidine 182 each coordinate isopentenyl diphosphate. Positions 189 and 193 each coordinate Mg(2+). Arginine 198 is a binding site for an all-trans-polyprenyl diphosphate. Arginine 199 serves as a coordination point for isopentenyl diphosphate. An all-trans-polyprenyl diphosphate-binding residues include lysine 275, threonine 276, glutamine 313, and lysine 330.

Belongs to the FPP/GGPP synthase family. Homodimer. Requires Mg(2+) as cofactor. Expressed in leaves, stems and roots. Highest expression in roots.

The protein resides in the mitochondrion. The catalysed reaction is 7 isopentenyl diphosphate + (2E)-geranyl diphosphate = all-trans-nonaprenyl diphosphate + 7 diphosphate. Its pathway is cofactor biosynthesis; ubiquinone biosynthesis. Its function is as follows. Involved in the supply of solanesyl diphosphate for ubiquinone-9 (UQ-9) biosynthesis in mitochondria. Farnesyl diphosphate is the preferred substrate. The polypeptide is Solanesyl-diphosphate synthase 1, mitochondrial (Oryza sativa subsp. japonica (Rice)).